A 324-amino-acid chain; its full sequence is Clavaminate synthase 1 (324 aa).

Fe cation contacts are provided by histidine 144, glutamate 146, and histidine 279. Arginine 293 contributes to the 2-oxoglutarate binding site.

It belongs to the clavaminate synthase family. It depends on Fe(2+) as a cofactor.

It carries out the reaction deoxyamidinoproclavaminate + 2-oxoglutarate + O2 = amidinoproclavaminate + succinate + CO2. The catalysed reaction is proclavaminate + 2-oxoglutarate + O2 = dihydroclavaminate + succinate + CO2 + H2O. It catalyses the reaction dihydroclavaminate + 2-oxoglutarate + O2 = clavaminate + succinate + CO2 + H2O. It participates in antibiotic biosynthesis; clavulanate biosynthesis; clavulanate from D-glyceraldehyde 3-phosphate and L-arginine: step 3/8. It functions in the pathway antibiotic biosynthesis; clavulanate biosynthesis; clavulanate from D-glyceraldehyde 3-phosphate and L-arginine: step 5/8. The protein operates within antibiotic biosynthesis; clavulanate biosynthesis; clavulanate from D-glyceraldehyde 3-phosphate and L-arginine: step 6/8. In Streptomyces clavuligerus, this protein is Clavaminate synthase 1 (cs1).